Reading from the N-terminus, the 467-residue chain is MKLPEALGSIHFVGIGGIGMSGIAEVLNNLGYTVQGSDVAENANVKRLRENGIAVTVGHKAENIDGAEVVVVSSAIKRDNPELLAARAKRLPVVRRAEMLAELMRLKSCVAIAGTHGKTTTTSLVATLLDKGGFDPTVINGGIINAYGTNARLGAGDWMVVEADESDGTFLKLPAEVAIITNIDPEHLDHFKTFDKVQEAFRTFVENVPFYGFAVMCIDHPVVQALVGRIEDRRIITYGENPQADVRLVDVDLRGGITRFGVVFRDRAGTAEHRIDGLKLPMPGKHNALNATAAIAVARELRVPDDRIIEAIGGFGGVKRRFTRTGEWKGATIFDDYGHHPVEISAVLRAARAATEGQVIAVVQPHRYTRLASLFDEFCTCFNDADHVIVAPVYAAGESPVPGADSEHLVQGLRARGHRSVTALKGPEELAGLVAGLAKPGDFVICLGAGTITQWAYALPGELEKLG.

ATP is bound at residue 114-120 (GTHGKTT).

Belongs to the MurCDEF family.

It localises to the cytoplasm. The enzyme catalyses UDP-N-acetyl-alpha-D-muramate + L-alanine + ATP = UDP-N-acetyl-alpha-D-muramoyl-L-alanine + ADP + phosphate + H(+). It participates in cell wall biogenesis; peptidoglycan biosynthesis. Its function is as follows. Cell wall formation. The chain is UDP-N-acetylmuramate--L-alanine ligase from Azorhizobium caulinodans (strain ATCC 43989 / DSM 5975 / JCM 20966 / LMG 6465 / NBRC 14845 / NCIMB 13405 / ORS 571).